A 237-amino-acid chain; its full sequence is Uridylate kinase (237 aa).

11 to 14 (KLSG) contributes to the ATP binding site. A UMP-binding site is contributed by G53. ATP is bound by residues G54 and R58. Residues D73 and 134-141 (TGNPFFTT) contribute to the UMP site. ATP contacts are provided by T161, Y167, and D170.

The protein belongs to the UMP kinase family. In terms of assembly, homohexamer.

Its subcellular location is the cytoplasm. It carries out the reaction UMP + ATP = UDP + ADP. Its pathway is pyrimidine metabolism; CTP biosynthesis via de novo pathway; UDP from UMP (UMPK route): step 1/1. Inhibited by UTP. Catalyzes the reversible phosphorylation of UMP to UDP. The sequence is that of Uridylate kinase from Burkholderia cenocepacia (strain HI2424).